The primary structure comprises 672 residues: Acetoacetyl-CoA synthetase (672 aa).

It belongs to the ATP-dependent AMP-binding enzyme family.

The protein resides in the cytoplasm. The protein localises to the cytosol. The catalysed reaction is acetoacetate + ATP + CoA = acetoacetyl-CoA + AMP + diphosphate. Its function is as follows. Converts acetoacetate to acetoacetyl-CoA in the cytosol. Ketone body-utilizing enzyme, responsible for the synthesis of cholesterol and fatty acids. The polypeptide is Acetoacetyl-CoA synthetase (AACS) (Macaca fascicularis (Crab-eating macaque)).